Reading from the N-terminus, the 276-residue chain is NAD-capped RNA hydrolase NudC (276 aa).

A substrate-binding site is contributed by Arg-82. Positions 112 and 115 each coordinate Zn(2+). Glu-125 contacts substrate. Residues Cys-130 and Cys-133 each coordinate Zn(2+). Substrate is bound at residue Tyr-138. Residues 139–262 enclose the Nudix hydrolase domain; that stretch reads PRLSPSMIVL…SIARYLIELY (124 aa). Ala-172, Glu-188, and Glu-192 together coordinate a divalent metal cation. A Nudix box motif is present at residues 173–194; that stretch reads GYVEPGESVEQCVAREVREEVG. 206–213 serves as a coordination point for substrate; the sequence is QGWPFPHS. Residue Glu-233 coordinates a divalent metal cation. Residue Ala-255 participates in substrate binding.

It belongs to the Nudix hydrolase family. NudC subfamily. In terms of assembly, homodimer. Requires Mg(2+) as cofactor. Mn(2+) is required as a cofactor. The cofactor is Zn(2+).

The catalysed reaction is a 5'-end NAD(+)-phospho-ribonucleoside in mRNA + H2O = a 5'-end phospho-adenosine-phospho-ribonucleoside in mRNA + beta-nicotinamide D-ribonucleotide + 2 H(+). It carries out the reaction NAD(+) + H2O = beta-nicotinamide D-ribonucleotide + AMP + 2 H(+). It catalyses the reaction NADH + H2O = reduced beta-nicotinamide D-ribonucleotide + AMP + 2 H(+). Its function is as follows. mRNA decapping enzyme that specifically removes the nicotinamide adenine dinucleotide (NAD) cap from a subset of mRNAs by hydrolyzing the diphosphate linkage to produce nicotinamide mononucleotide (NMN) and 5' monophosphate mRNA. The NAD-cap is present at the 5'-end of some mRNAs and stabilizes RNA against 5'-processing. Has preference for mRNAs with a 5'-end purine. Catalyzes the hydrolysis of a broad range of dinucleotide pyrophosphates. This chain is NAD-capped RNA hydrolase NudC, found in Stutzerimonas stutzeri (strain A1501) (Pseudomonas stutzeri).